The sequence spans 316 residues: Beta-lactamase 3 (316 aa).

Positions 1–29 (MFVLNKFFTNSHYKKIVPVVLLSCATLIG) are cleaved as a signal peptide. Residue cysteine 30 is the site of N-palmitoyl cysteine attachment. Cysteine 30 is lipidated: S-diacylglycerol cysteine. Positions 34 to 53 (NTQSESNKQTNQTNQVKQEN) are disordered. The span at 40–50 (NKQTNQTNQVK) shows a compositional bias: low complexity. Serine 95 serves as the catalytic Acyl-ester intermediate. Glutamate 191 (proton acceptor) is an active-site residue. Residue 257-259 (KTG) participates in substrate binding.

This sequence belongs to the class-A beta-lactamase family.

Its subcellular location is the cell membrane. It carries out the reaction a beta-lactam + H2O = a substituted beta-amino acid. The sequence is that of Beta-lactamase 3 (blaZ) from Bacillus cereus.